A 157-amino-acid chain; its full sequence is MADKAASGVLTKLPQKQIQEMKEAFSMIDVDRDGFVSKEDIKAISEQLGRAPDDKELTAMLKEAPGPLNFTMFLSIFSDKLSGTDSEETIRNAFAMFDEQETKKLNIEYIKDLLENMGDNFNKDEMRMTFKEAPVEGGKFDYVKFTAMIKGSGEEEA.

EF-hand domains are found at residues 16-51 (KQIQ…LGRA) and 85-120 (DSEE…MGDN). Residues Asp29, Asp31, Asp33, and Asp40 each contribute to the Ca(2+) site.

In terms of biological role, in molluscan muscle, calcium regulation is associated with myosin rather than with actin. Muscle myosin contains two types of light chains: the catalytic light chain, essential for ATPase activity, and the regulatory light chain, a calcium-binding protein responsible for Ca(2+) dependent binding and Ca(2+) dependent Mg-ATPase activity. This chain is Myosin regulatory light chain, striated adductor muscle, found in Argopecten irradians (Bay scallop).